Consider the following 393-residue polypeptide: tRNA(Met) cytidine acetate ligase (393 aa).

ATP-binding residues include G81, N142, and R167.

The protein belongs to the TmcAL family.

It localises to the cytoplasm. It carries out the reaction cytidine(34) in elongator tRNA(Met) + acetate + ATP = N(4)-acetylcytidine(34) in elongator tRNA(Met) + AMP + diphosphate. Its function is as follows. Catalyzes the formation of N(4)-acetylcytidine (ac(4)C) at the wobble position of elongator tRNA(Met), using acetate and ATP as substrates. First activates an acetate ion to form acetyladenylate (Ac-AMP) and then transfers the acetyl group to tRNA to form ac(4)C34. This chain is tRNA(Met) cytidine acetate ligase, found in Bacillus cereus (strain AH187).